A 207-amino-acid polypeptide reads, in one-letter code: Thiamine-phosphate synthase (207 aa).

Residues 41-45 (QLRLK) and N73 contribute to the 4-amino-2-methyl-5-(diphosphooxymethyl)pyrimidine site. The Mg(2+) site is built by D74 and D93. 4-amino-2-methyl-5-(diphosphooxymethyl)pyrimidine is bound at residue T111. 2-[(2R,5Z)-2-carboxy-4-methylthiazol-5(2H)-ylidene]ethyl phosphate is bound at residue 138-140 (TKT). A 4-amino-2-methyl-5-(diphosphooxymethyl)pyrimidine-binding site is contributed by K141. Residue G168 coordinates 2-[(2R,5Z)-2-carboxy-4-methylthiazol-5(2H)-ylidene]ethyl phosphate.

This sequence belongs to the thiamine-phosphate synthase family. Requires Mg(2+) as cofactor.

It catalyses the reaction 2-[(2R,5Z)-2-carboxy-4-methylthiazol-5(2H)-ylidene]ethyl phosphate + 4-amino-2-methyl-5-(diphosphooxymethyl)pyrimidine + 2 H(+) = thiamine phosphate + CO2 + diphosphate. The catalysed reaction is 2-(2-carboxy-4-methylthiazol-5-yl)ethyl phosphate + 4-amino-2-methyl-5-(diphosphooxymethyl)pyrimidine + 2 H(+) = thiamine phosphate + CO2 + diphosphate. It carries out the reaction 4-methyl-5-(2-phosphooxyethyl)-thiazole + 4-amino-2-methyl-5-(diphosphooxymethyl)pyrimidine + H(+) = thiamine phosphate + diphosphate. It functions in the pathway cofactor biosynthesis; thiamine diphosphate biosynthesis; thiamine phosphate from 4-amino-2-methyl-5-diphosphomethylpyrimidine and 4-methyl-5-(2-phosphoethyl)-thiazole: step 1/1. Functionally, condenses 4-methyl-5-(beta-hydroxyethyl)thiazole monophosphate (THZ-P) and 2-methyl-4-amino-5-hydroxymethyl pyrimidine pyrophosphate (HMP-PP) to form thiamine monophosphate (TMP). This chain is Thiamine-phosphate synthase, found in Pelagibacter ubique (strain HTCC1062).